The sequence spans 184 residues: Photosystem I assembly protein Ycf4 (184 aa).

2 helical membrane passes run 22-42 and 64-84; these read FCWA…GISS and IVMS…WSTI.

This sequence belongs to the Ycf4 family.

It localises to the plastid. The protein localises to the chloroplast thylakoid membrane. In terms of biological role, seems to be required for the assembly of the photosystem I complex. The chain is Photosystem I assembly protein Ycf4 from Piper cenocladum (Ant piper).